The primary structure comprises 89 residues: Small ribosomal subunit protein uS17 (89 aa).

This sequence belongs to the universal ribosomal protein uS17 family. As to quaternary structure, part of the 30S ribosomal subunit.

In terms of biological role, one of the primary rRNA binding proteins, it binds specifically to the 5'-end of 16S ribosomal RNA. The polypeptide is Small ribosomal subunit protein uS17 (Xanthomonas axonopodis pv. citri (strain 306)).